Reading from the N-terminus, the 206-residue chain is Large ribosomal subunit protein uL4 (206 aa).

Positions 63-97 (MYKQKGTGRARHHSARAPQFRGGGKAHGPVVRSHE) are disordered. A compositionally biased stretch (basic residues) spans 64–77 (YKQKGTGRARHHSA).

This sequence belongs to the universal ribosomal protein uL4 family. Part of the 50S ribosomal subunit.

In terms of biological role, one of the primary rRNA binding proteins, this protein initially binds near the 5'-end of the 23S rRNA. It is important during the early stages of 50S assembly. It makes multiple contacts with different domains of the 23S rRNA in the assembled 50S subunit and ribosome. Forms part of the polypeptide exit tunnel. This chain is Large ribosomal subunit protein uL4, found in Rhizobium leguminosarum bv. trifolii (strain WSM2304).